A 110-amino-acid polypeptide reads, in one-letter code: Vacuolar ATPase assembly integral membrane protein VMA21 (110 aa).

Positions 1–28 are disordered; the sequence is MTTRRIIGQDGEEKTYLDVDPRGPPGPS. The Cytoplasmic portion of the chain corresponds to 1 to 44; sequence MTTRRIIGQDGEEKTYLDVDPRGPPGPSNISPAVPASVIWKLMS. A compositionally biased stretch (basic and acidic residues) spans 11–21; sequence GEEKTYLDVDP. Residues 45–65 traverse the membrane as a helical segment; it reads FTFAMITLPIGTYFFTVNYVF. Over 66–71 the chain is Lumenal; the sequence is GGNATY. Residues 72 to 92 form a helical membrane-spanning segment; the sequence is AGALAAIMANVVLIAYVIMAF. Topologically, residues 93 to 110 are cytoplasmic; sequence KDDQAEQAEDAREAKKEL. A Prevents secretion from ER motif is present at residues 107–110; it reads KKEL.

It belongs to the VMA21 family.

The protein localises to the endoplasmic reticulum membrane. The protein resides in the endoplasmic reticulum-Golgi intermediate compartment membrane. Its subcellular location is the cytoplasmic vesicle. It is found in the COPII-coated vesicle membrane. Functionally, required for the assembly of the V0 complex of the vacuolar ATPase (V-ATPase) in the endoplasmic reticulum. The protein is Vacuolar ATPase assembly integral membrane protein VMA21 of Phaeosphaeria nodorum (strain SN15 / ATCC MYA-4574 / FGSC 10173) (Glume blotch fungus).